We begin with the raw amino-acid sequence, 568 residues long: MSIKLKQRFVPQLAAMNHEFAEDFSKMLETVDTSHIKEKTVVKGQVIEIKNDIIIVDVGLKNEGRIPKSEFLALPEVGDVVEVFIEKIEGRNGRTILSREKAVKEELWGQLEIMCSKGEFVDGTIFGRVKGGFTVDLSGVVAFLPGSQVDVRPIKDPTSIMNIKQPFKILSMDKKLGNIVVSRRAILEESRSEARDEMLSKIKEGMVLEGTVKNITDYGAFIDLGSVDGLLHLTDISWGRVNHPSEVLDFNQKVKVMVIKFDEKNKRISLGIKQLDSNPWEAIKEEFPVGKQMTGKVTNFADYGVFIELKDGLEGLVHSSEISWLKSNQNPRKTLTIGQEVEFVVLEVDTEKHRVSLSIKQCQENPLTKFAENNPVGTIIKAPIRNITDFGIFVALGNNMDGMIHEGDISWEDKGTDLLKSYKKGDEIECKVLAINIEKEQVSLGIKQLSPNPYQEISDEYKKGTIVKALITEVKDEGLEVLLNDKVAGFIKRTELSDEKDEQKPEMFQIDKEIEAKVVSIEKSTGRILLSVKAHKIAERQKALKEYGSSDNTTNMGDILANALEDKK.

6 S1 motif domains span residues 39-100, 118-184, 205-273, 290-360, 377-447, and 464-533; these read KTVV…LSRE, GEFV…VSRR, GMVL…LGIK, GKQM…LSIK, GTII…LGIK, and GTIV…LSVK.

Belongs to the bacterial ribosomal protein bS1 family.

Binds mRNA; thus facilitating recognition of the initiation point. It is needed to translate mRNA with a short Shine-Dalgarno (SD) purine-rich sequence. The chain is Small ribosomal subunit protein bS1 (rpsA) from Rickettsia conorii (strain ATCC VR-613 / Malish 7).